A 300-amino-acid chain; its full sequence is 2-keto-3-deoxy-L-fuconate dehydrogenase (300 aa).

Residues 63 to 90 and D112 each bind NAD(+); that span reads LITA…IATD. Residue R198 participates in substrate binding. Y201 functions as the Proton acceptor in the catalytic mechanism. NAD(+) contacts are provided by residues K205 and 234 to 238; that span reads IKTPS. Substrate contacts are provided by R242 and R260.

It belongs to the short-chain dehydrogenases/reductases (SDR) family.

Plays a role in the catabolism of L-fucose. Catalyzes the NAD(+)-dependent oxidation of 2-keo-3-deoxy-L-fuconate to 2,4-diketo-3-deoxy-L-fuconate. The sequence is that of 2-keto-3-deoxy-L-fuconate dehydrogenase from Xanthomonas campestris pv. campestris (strain ATCC 33913 / DSM 3586 / NCPPB 528 / LMG 568 / P 25).